The sequence spans 215 residues: Sperm acrosome membrane-associated protein 3 (215 aa).

Residues 1–63 lie on the Cytoplasmic side of the membrane; sequence MVSALRGAPL…EARSRALRRR (63 aa). The chain crosses the membrane as a helical; Signal-anchor for type II membrane protein span at residues 64–84; it reads WCPAGIMLLALVCLLSCLLPS. Residues 85–215 are Extracellular-facing; the sequence is SEAKLYGRCE…LTEWVDGCDF (131 aa). Residues 88–215 form the C-type lysozyme domain; that stretch reads KLYGRCELAR…LTEWVDGCDF (128 aa). 4 disulfide bridges follow: Cys-93–Cys-213, Cys-117–Cys-201, Cys-151–Cys-166, and Cys-162–Cys-180.

Belongs to the glycosyl hydrolase 22 family. In terms of assembly, interacts with ASTL. The processed form derives from the membrane form by proteolytic processing. The processed form is expressed in sperm (at protein level). Expressed in testis, epididymis and placenta.

The protein resides in the cytoplasmic vesicle. It localises to the secretory vesicle. The protein localises to the acrosome membrane. Its subcellular location is the secreted. Its function is as follows. Sperm surface membrane protein that may be involved in sperm-egg plasma membrane adhesion and fusion during fertilization. It could be a potential receptor for the egg oligosaccharide residue N-acetylglucosamine, which is present in the extracellular matrix over the egg plasma membrane. The processed form has no detectable bacteriolytic activity in vitro. The polypeptide is Sperm acrosome membrane-associated protein 3 (SPACA3) (Homo sapiens (Human)).